We begin with the raw amino-acid sequence, 465 residues long: ATP synthase subunit beta (465 aa).

148–155 (GGAGVGKT) contacts ATP.

Belongs to the ATPase alpha/beta chains family. F-type ATPases have 2 components, CF(1) - the catalytic core - and CF(0) - the membrane proton channel. CF(1) has five subunits: alpha(3), beta(3), gamma(1), delta(1), epsilon(1). CF(0) has three main subunits: a(1), b(2) and c(9-12). The alpha and beta chains form an alternating ring which encloses part of the gamma chain. CF(1) is attached to CF(0) by a central stalk formed by the gamma and epsilon chains, while a peripheral stalk is formed by the delta and b chains.

The protein localises to the cell inner membrane. The enzyme catalyses ATP + H2O + 4 H(+)(in) = ADP + phosphate + 5 H(+)(out). In terms of biological role, produces ATP from ADP in the presence of a proton gradient across the membrane. The catalytic sites are hosted primarily by the beta subunits. This chain is ATP synthase subunit beta, found in Neisseria gonorrhoeae (strain ATCC 700825 / FA 1090).